The sequence spans 311 residues: Homeobox-leucine zipper protein ATHB-6 (311 aa).

Positions 1–10 (MMKRLSSSDS) are enriched in polar residues. The interval 1 to 32 (MMKRLSSSDSVGGLISLCPTTSTDEQSPRRYG) is disordered. Positions 1–43 (MMKRLSSSDSVGGLISLCPTTSTDEQSPRRYGGREFQSMLEGY) are interaction with ABI1. Residues 59-118 (LSEKKRRLSINQVKALEKNFELENKLEPERKVKLAQELGLQPRQVAVWFQNRRARWKTKQ) constitute a DNA-binding region (homeobox). Residues 119–154 (LEKDYGVLKTQYDSLRHNFDSLRRDNESLLQEISKL) are leucine-zipper. Positions 157–183 (KLNGGGGEEEEEENNAAVTTESDISVK) are disordered. Residues 218–311 (LRDLLPLKAA…HWYSTVDHWN (94 aa)) form an interaction with ABI1 region.

Belongs to the HD-ZIP homeobox family. Class I subfamily. Interacts with ABI1. Phosphorylated by PKA. Reversible inactivation of the binding to DNA by phosphorylation. As to expression, widely expressed.

It localises to the nucleus. Its function is as follows. Transcription activator that may act as growth regulators in response to water deficit. Interacts with the core sequence 5'-CAATTATTA-3' of promoters in response to ABA and in an ABI1-dependent manner. Involved in the negative regulation of the ABA signaling pathway. The chain is Homeobox-leucine zipper protein ATHB-6 (ATHB-6) from Arabidopsis thaliana (Mouse-ear cress).